The sequence spans 331 residues: Fructose-1,6-bisphosphatase class 1 (331 aa).

Mg(2+) contacts are provided by glutamate 100, aspartate 120, leucine 122, and aspartate 123. Substrate is bound by residues 123–126 (DGSS), asparagine 216, tyrosine 243, 261–263 (YLY), and lysine 273. Mg(2+) is bound at residue glutamate 279.

This sequence belongs to the FBPase class 1 family. As to quaternary structure, homotetramer. Mg(2+) serves as cofactor.

It is found in the cytoplasm. The enzyme catalyses beta-D-fructose 1,6-bisphosphate + H2O = beta-D-fructose 6-phosphate + phosphate. It functions in the pathway carbohydrate biosynthesis; gluconeogenesis. This is Fructose-1,6-bisphosphatase class 1 from Amoebophilus asiaticus (strain 5a2).